The chain runs to 278 residues: Pyrroline-5-carboxylate reductase 2 (278 aa).

The protein belongs to the pyrroline-5-carboxylate reductase family.

It localises to the cytoplasm. It catalyses the reaction L-proline + NADP(+) = (S)-1-pyrroline-5-carboxylate + NADPH + 2 H(+). The catalysed reaction is L-proline + NAD(+) = (S)-1-pyrroline-5-carboxylate + NADH + 2 H(+). Its pathway is amino-acid biosynthesis; L-proline biosynthesis; L-proline from L-glutamate 5-semialdehyde: step 1/1. In terms of biological role, catalyzes the reduction of 1-pyrroline-5-carboxylate (PCA) to L-proline. In Bacillus subtilis (strain 168), this protein is Pyrroline-5-carboxylate reductase 2 (proI).